A 1225-amino-acid chain; its full sequence is DNA-directed RNA polymerase subunit beta' (1225 aa).

Residues C60, C62, C75, and C78 each contribute to the Zn(2+) site. Mg(2+) contacts are provided by D450, D452, and D454. The Zn(2+) site is built by C818, C892, C899, and C902.

It belongs to the RNA polymerase beta' chain family. As to quaternary structure, the RNAP catalytic core consists of 2 alpha, 1 beta, 1 beta' and 1 omega subunit. When a sigma factor is associated with the core the holoenzyme is formed, which can initiate transcription. Mg(2+) serves as cofactor. It depends on Zn(2+) as a cofactor.

It catalyses the reaction RNA(n) + a ribonucleoside 5'-triphosphate = RNA(n+1) + diphosphate. Its function is as follows. DNA-dependent RNA polymerase catalyzes the transcription of DNA into RNA using the four ribonucleoside triphosphates as substrates. This is DNA-directed RNA polymerase subunit beta' from Streptococcus pneumoniae (strain ATCC BAA-255 / R6).